The following is a 450-amino-acid chain: Tubulin alpha chain, testis-specific (450 aa).

The MREC motif signature appears at M1–C4. Q11 serves as a coordination point for GTP. At K40 the chain carries N6-acetyllysine. GTP is bound by residues E71, S140, G144, T145, T179, N206, and N228. E71 lines the Mg(2+) pocket. E254 is a catalytic residue.

Belongs to the tubulin family. As to quaternary structure, dimer of alpha and beta chains. A typical microtubule is a hollow water-filled tube with an outer diameter of 25 nm and an inner diameter of 15 nM. Alpha-beta heterodimers associate head-to-tail to form protofilaments running lengthwise along the microtubule wall with the beta-tubulin subunit facing the microtubule plus end conferring a structural polarity. Microtubules usually have 13 protofilaments but different protofilament numbers can be found in some organisms and specialized cells. Requires Mg(2+) as cofactor. Some glutamate residues at the C-terminus are polyglycylated, resulting in polyglycine chains on the gamma-carboxyl group. Glycylation is mainly limited to tubulin incorporated into axonemes (cilia and flagella) whereas glutamylation is prevalent in neuronal cells, centrioles, axonemes, and the mitotic spindle. Both modifications can coexist on the same protein on adjacent residues, and lowering polyglycylation levels increases polyglutamylation, and reciprocally. The precise function of polyglycylation is still unclear. Post-translationally, some glutamate residues at the C-terminus are polyglutamylated, resulting in polyglutamate chains on the gamma-carboxyl group. Polyglutamylation plays a key role in microtubule severing by spastin (SPAST). SPAST preferentially recognizes and acts on microtubules decorated with short polyglutamate tails: severing activity by SPAST increases as the number of glutamates per tubulin rises from one to eight, but decreases beyond this glutamylation threshold. In terms of processing, acetylation of alpha chains at Lys-40 is located inside the microtubule lumen. This modification has been correlated with increased microtubule stability, intracellular transport and ciliary assembly. Undergoes a tyrosination/detyrosination cycle, the cyclic removal and re-addition of a C-terminal tyrosine residue by the enzymes tubulin tyrosine carboxypeptidase (MATCAP, VASH1 or VASH2) and tubulin tyrosine ligase (TTL), respectively. Post-translationally, tyrosination promotes microtubule interaction with CAP-Gly microtubule plus-end tracking proteins. Tyrosinated tubulins regulate the initiation of dynein-driven motility. In terms of processing, detyrosination is involved in metaphase plate congression by guiding chromosomes during mitosis. Detyrosination increases microtubules-dependent mechanotransduction in dystrophic cardiac and skeletal muscle. In cardiomyocytes, detyrosinated microtubules are required to resist to contractile compression during contraction. As to expression, testis specific.

Its subcellular location is the cytoplasm. It is found in the cytoskeleton. The enzyme catalyses GTP + H2O = GDP + phosphate + H(+). In terms of biological role, tubulin is the major constituent of microtubules, a cylinder consisting of laterally associated linear protofilaments composed of alpha- and beta-tubulin heterodimers. Microtubules grow by the addition of GTP-tubulin dimers to the microtubule end, where a stabilizing cap forms. Below the cap, tubulin dimers are in GDP-bound state, owing to GTPase activity of alpha-tubulin. This chain is Tubulin alpha chain, testis-specific, found in Oncorhynchus mykiss (Rainbow trout).